Consider the following 420-residue polypeptide: Type II methyltransferase M.HgiCI (420 aa).

The SAM-dependent MTase C5-type domain occupies 2–417 (LKFIDLFAGI…LDLFKSADLA (416 aa)). Cysteine 75 is a catalytic residue.

Belongs to the class I-like SAM-binding methyltransferase superfamily. C5-methyltransferase family.

The enzyme catalyses a 2'-deoxycytidine in DNA + S-adenosyl-L-methionine = a 5-methyl-2'-deoxycytidine in DNA + S-adenosyl-L-homocysteine + H(+). A methylase that recognizes the double-stranded sequence 5'-GGYRCC-3', methylates C-5 on both strands, and protects the DNA from cleavage by the HgiCI endonuclease. This Herpetosiphon aurantiacus (Herpetosiphon giganteus) protein is Type II methyltransferase M.HgiCI (hgiCIM).